We begin with the raw amino-acid sequence, 272 residues long: Granaticin polyketide synthase putative ketoacyl reductase 1 (272 aa).

21 to 45 (LVTGATSGIGLAIARRLAALGARTF) lines the NAD(+) pocket. Ser155 contributes to the substrate binding site. The active-site Proton acceptor is Tyr168.

The protein belongs to the short-chain dehydrogenases/reductases (SDR) family.

It functions in the pathway antibiotic biosynthesis; granaticin biosynthesis. The chain is Granaticin polyketide synthase putative ketoacyl reductase 1 (gra-orf5) from Streptomyces violaceoruber.